A 137-amino-acid polypeptide reads, in one-letter code: Methylglyoxal synthase (137 aa).

The MGS-like domain occupies 1-137 (MKIALIAHDR…NIVHGRDRDA (137 aa)). Residues H8, K12, 34–37 (TGTT), and 54–55 (SG) each bind substrate. D60 (proton donor/acceptor) is an active-site residue. H87 contributes to the substrate binding site.

Belongs to the methylglyoxal synthase family.

It carries out the reaction dihydroxyacetone phosphate = methylglyoxal + phosphate. Catalyzes the formation of methylglyoxal from dihydroxyacetone phosphate. In Bacillus licheniformis (strain ATCC 14580 / DSM 13 / JCM 2505 / CCUG 7422 / NBRC 12200 / NCIMB 9375 / NCTC 10341 / NRRL NRS-1264 / Gibson 46), this protein is Methylglyoxal synthase.